A 207-amino-acid chain; its full sequence is LexA repressor (207 aa).

Positions 28-48 form a DNA-binding region, H-T-H motif; it reads RAEIAQKLGFKSANAAEEHLK. Active-site for autocatalytic cleavage activity residues include serine 124 and lysine 161.

This sequence belongs to the peptidase S24 family. Homodimer.

It carries out the reaction Hydrolysis of Ala-|-Gly bond in repressor LexA.. Represses a number of genes involved in the response to DNA damage (SOS response), including recA and lexA. In the presence of single-stranded DNA, RecA interacts with LexA causing an autocatalytic cleavage which disrupts the DNA-binding part of LexA, leading to derepression of the SOS regulon and eventually DNA repair. The sequence is that of LexA repressor from Aeromonas hydrophila subsp. hydrophila (strain ATCC 7966 / DSM 30187 / BCRC 13018 / CCUG 14551 / JCM 1027 / KCTC 2358 / NCIMB 9240 / NCTC 8049).